A 354-amino-acid chain; its full sequence is UPF0421 protein BH2644 (354 aa).

4 consecutive transmembrane segments (helical) span residues 22–42, 60–80, 107–127, and 133–153; these read AVCLTTAICMAFNLSPTFAVI, LIRLPAAALGAFFAVLSAYFF, TLVATLTAVAMIPSTTDHLFA, and VAGTSLGIMISTFVNFMILPP.

The protein belongs to the UPF0421 family.

The protein resides in the cell membrane. The chain is UPF0421 protein BH2644 from Halalkalibacterium halodurans (strain ATCC BAA-125 / DSM 18197 / FERM 7344 / JCM 9153 / C-125) (Bacillus halodurans).